The primary structure comprises 695 residues: Phenoloxidase subunit 2 (695 aa).

H215, H219, and H245 together coordinate Cu cation. The active-site Proton acceptor is the E353. Residues H368, H372, and H408 each contribute to the Cu cation site. Disulfide bonds link C586–C630 and C588–C637.

In terms of assembly, heterodimer. Forms a complex with an interleukin 1-like protein as a consequence of a host defense response. Cu(2+) serves as cofactor. Post-translationally, the N-terminus is blocked. As to expression, synthesized by oenocytoids, a type of hemocyte, and released into the hemolymph plasma.

The protein localises to the secreted. The enzyme catalyses 2 L-dopa + O2 = 2 L-dopaquinone + 2 H2O. It catalyses the reaction L-tyrosine + O2 = L-dopaquinone + H2O. With respect to regulation, activated by immulectin and lipopolysaccharide. This is a copper-containing oxidase that functions in the formation of pigments such as melanins and other polyphenolic compounds. Catalyzes the rate-limiting conversions of tyrosine to DOPA, DOPA to DOPA-quinone and possibly 5,6 dihydroxyindole to indole-5'6 quinone. Binds to the surface of hemocytes and is involved in hemocyte melanization. The polypeptide is Phenoloxidase subunit 2 (Manduca sexta (Tobacco hawkmoth)).